The chain runs to 237 residues: Cuticlin-like protein 19 (237 aa).

A signal peptide spans 1 to 20 (MVEYNRIFCVLVIFSTTIKC).

Interacts with vps-51 and vps-52. As to expression, expression detected in motor neurons.

Its subcellular location is the golgi apparatus. The protein resides in the trans-Golgi network. The polypeptide is Cuticlin-like protein 19 (cutl-19) (Caenorhabditis elegans).